The chain runs to 152 residues: MFRGANAVSLDAKGRISMPARYREELMARSAGQLIVTIDAMDPCLCIYPLPEWELIETKLRELPSLREETRRLQRLLIGNAVDLELDGSGRFLIPPRLREHASLDKHAMLVGQLNKFQLWNEDAWIAIANADLAAIKQQPGDLPGELRDLIL.

2 SpoVT-AbrB domains span residues 5 to 52 (ANAV…PLPE) and 81 to 124 (AVDL…NEDA).

This sequence belongs to the MraZ family. Forms oligomers.

The protein resides in the cytoplasm. The protein localises to the nucleoid. The chain is Transcriptional regulator MraZ from Azotobacter vinelandii (strain DJ / ATCC BAA-1303).